Here is a 28-residue protein sequence, read N- to C-terminus: 3,4-dihydroxybenzoate decarboxylase (28 aa).

As to quaternary structure, homopentamer.

It carries out the reaction 3,4-dihydroxybenzoate + H(+) = catechol + CO2. Inhibited by oxygen. Completely inhibited by HgCl(2). Partially inhibited by ZnSO(4), 2,3,4-trihydroxybeonzoate and 3,4,5-trihydroxybeonzoate. Unaffected by KCl, MnCl(2) or EDTA. Not stimulated by thiamine phosphate, pyridoxal 5'-phosphate or biotin. Not inhibited by hydroxylamine, NaBH(4) or avidin. Functionally, reversibly catalyzes the decarboxylation of 3,4-dihydroxybenzoate to catechol. Inactive toward 4-hydroxybenzoate and other benzoate derivatives. The chain is 3,4-dihydroxybenzoate decarboxylase from Sedimentibacter hydroxybenzoicus (Clostridium hydroxybenzoicum).